Here is a 213-residue protein sequence, read N- to C-terminus: ATP phosphoribosyltransferase (213 aa).

The protein belongs to the ATP phosphoribosyltransferase family. Short subfamily. As to quaternary structure, heteromultimer composed of HisG and HisZ subunits.

It localises to the cytoplasm. It catalyses the reaction 1-(5-phospho-beta-D-ribosyl)-ATP + diphosphate = 5-phospho-alpha-D-ribose 1-diphosphate + ATP. Its pathway is amino-acid biosynthesis; L-histidine biosynthesis; L-histidine from 5-phospho-alpha-D-ribose 1-diphosphate: step 1/9. Its function is as follows. Catalyzes the condensation of ATP and 5-phosphoribose 1-diphosphate to form N'-(5'-phosphoribosyl)-ATP (PR-ATP). Has a crucial role in the pathway because the rate of histidine biosynthesis seems to be controlled primarily by regulation of HisG enzymatic activity. The chain is ATP phosphoribosyltransferase from Listeria welshimeri serovar 6b (strain ATCC 35897 / DSM 20650 / CCUG 15529 / CIP 8149 / NCTC 11857 / SLCC 5334 / V8).